The primary structure comprises 122 residues: uncharacterized protein (122 aa).

A run of 2 helical transmembrane segments spans residues 43–63 and 76–96; these read PIIITLFIFSFVISRMIIFFI and AVADAIINSIALVCIIVILYF.

The protein resides in the membrane. This is an uncharacterized protein from Schizosaccharomyces pombe (strain 972 / ATCC 24843) (Fission yeast).